A 1573-amino-acid chain; its full sequence is Soluble scavenger receptor cysteine-rich domain-containing protein SSC5D (1573 aa).

A signal peptide spans 1 to 16 (MRVLACLLAALVGIQA). The SRCR 1 domain occupies 20–120 (LRLADGPHGC…HEEDAGVVCA (101 aa)). Disulfide bonds link Cys45–Cys109, Cys58–Cys119, and Cys89–Cys99. The segment at 153–192 (EPLVTHAPRPAGNPQNASRKKSPRPKQAKSTRAPLLTTGA) is disordered. N-linked (GlcNAc...) asparagine glycosylation is present at Asn168. Basic residues predominate over residues 170–181 (SRKKSPRPKQAK). SRCR domains follow at residues 198–298 (LRLV…LVCT) and 304–404 (LRLA…AVCD). Intrachain disulfides connect Cys223-Cys287, Cys236-Cys297, Cys267-Cys277, Cys329-Cys393, Cys342-Cys403, and Cys373-Cys383. 2 N-linked (GlcNAc...) asparagine glycosylation sites follow: Asn376 and Asn420. The interval 412 to 465 (PPTAPTDSNNSTPREAASRPPSTMTSQAPGTAGVSPPPASPTVLWEPGPEAGSP) is disordered. Residues 431-440 (PPSTMTSQAP) are compositionally biased toward polar residues. The region spanning 467–568 (LRLVAGPSKC…HNEDVGVTCT (102 aa)) is the SRCR 4 domain. 3 disulfide bridges follow: Cys492-Cys557, Cys505-Cys567, and Cys537-Cys547. A disordered region spans residues 614 to 769 (EKTTTKAPGK…SVSTTGESGL (156 aa)). Residues 626–637 (KSTKKWVTKNAK) show a composition bias toward basic residues. A compositionally biased stretch (polar residues) spans 654 to 671 (AQSPPDLTSQTTAALTTE). A compositionally biased stretch (basic and acidic residues) spans 672–685 (ASRRPTSEFTRRPT). Polar residues-rich tracts occupy residues 687 to 702 (EAPQ…TLTP) and 711 to 735 (KTMA…SIPQ). An SRCR 5 domain is found at 772 to 872 (VRLADGPNRC…HEEDVGLTCT (101 aa)). 3 disulfide bridges follow: Cys797–Cys861, Cys810–Cys871, and Cys841–Cys851. Disordered stretches follow at residues 895–1475 (KGTT…PCVA) and 1554–1573 (MPAP…RGDV). A compositionally biased stretch (basic and acidic residues) spans 924 to 934 (RLPDTGSKDGY). 2 stretches are compositionally biased toward pro residues: residues 1004–1020 (PPTP…PPGP) and 1083–1093 (TPEPSPTPLPT). Residues 1101–1140 (DPSTPSEVTSLSPTSEQVPESDTTPDLDTTPYSSTVSEYS) are compositionally biased toward polar residues. A compositionally biased stretch (pro residues) spans 1144–1160 (DPSPSPHPTTTPDPTMA). Composition is skewed to low complexity over residues 1161 to 1175 (PDPI…TPHF) and 1185 to 1277 (PHPT…MPHP). Positions 1278-1328 (TTTPHPTTTPHPTTTPHPTTTPHPTMTPDPTTTPYPTTTPDPTTTPHPTTP) are enriched in pro residues. Polar residues-rich tracts occupy residues 1335-1354 (VITT…SPTL) and 1364-1380 (PQLT…TSQI). The segment covering 1381–1401 (PTLEPSPALESSPSRSSTATS) has biased composition (low complexity). The span at 1464–1475 (GQSPGPHGPCVA) shows a compositional bias: pro residues.

In terms of assembly, interacts with LGALS1 and laminin. Highly expressed in monocytes/macrophages and T-lymphocytes. Highly expressed in placenta and spleen, and also detected at lower levels in colon, and more weakly in lung, heart and kidney.

Its subcellular location is the secreted. It is found in the cytoplasm. Binds to extracellular matrix proteins. Binds to pathogen-associated molecular patterns (PAMPs) present on the cell walls of Gram-positive and Gram-negative bacteria and fungi, behaving as a pattern recognition receptor (PRR). Induces bacterial and fungal aggregation and subsequent inhibition of PAMP-induced cytokine release. Does not possess intrinsic bactericidal activity. May play a role in the innate defense and homeostasis of certain epithelial surfaces. This is Soluble scavenger receptor cysteine-rich domain-containing protein SSC5D (SSC5D) from Homo sapiens (Human).